The sequence spans 161 residues: Nucleotide-binding protein PSEEN4469 (161 aa).

This sequence belongs to the YajQ family.

In terms of biological role, nucleotide-binding protein. The sequence is that of Nucleotide-binding protein PSEEN4469 from Pseudomonas entomophila (strain L48).